The following is a 105-amino-acid chain: UPF0145 protein Ping_0381 (105 aa).

This sequence belongs to the UPF0145 family.

The sequence is that of UPF0145 protein Ping_0381 from Psychromonas ingrahamii (strain DSM 17664 / CCUG 51855 / 37).